The following is a 78-amino-acid chain: Large ribosomal subunit protein bL28 (78 aa).

Residues 1-31 (MAAHCQVTGAEPGFGHSISHSHRRNKRRFDP) form a disordered region.

The protein belongs to the bacterial ribosomal protein bL28 family.

This Arthrobacter sp. (strain FB24) protein is Large ribosomal subunit protein bL28.